Consider the following 237-residue polypeptide: Leucyl/phenylalanyl-tRNA--protein transferase (237 aa).

The protein belongs to the L/F-transferase family.

The protein resides in the cytoplasm. The catalysed reaction is N-terminal L-lysyl-[protein] + L-leucyl-tRNA(Leu) = N-terminal L-leucyl-L-lysyl-[protein] + tRNA(Leu) + H(+). It catalyses the reaction N-terminal L-arginyl-[protein] + L-leucyl-tRNA(Leu) = N-terminal L-leucyl-L-arginyl-[protein] + tRNA(Leu) + H(+). It carries out the reaction L-phenylalanyl-tRNA(Phe) + an N-terminal L-alpha-aminoacyl-[protein] = an N-terminal L-phenylalanyl-L-alpha-aminoacyl-[protein] + tRNA(Phe). In terms of biological role, functions in the N-end rule pathway of protein degradation where it conjugates Leu, Phe and, less efficiently, Met from aminoacyl-tRNAs to the N-termini of proteins containing an N-terminal arginine or lysine. This Shewanella baltica (strain OS195) protein is Leucyl/phenylalanyl-tRNA--protein transferase.